Reading from the N-terminus, the 590-residue chain is MAKILLLPPALINQIAAGEVIERPASVVKEIVENAIDAGATRLALEIEAAGSKLIRLSDNGSGIEKEDLALAFTTHATSKIRTLEDLEQVSSLGFRGEALASIASISKTTLTSCTQSSDHAWKISPHLNENITPAAHPQGTTIEIRDLFYNTPARKKFLRSDRTERYHITQLLAGIALSRAPFVITLHEQDRKILEYGGKTLKESLKSVMGDEFLAQSIEIQAEHEGMHLHGWVGLPTYTHQQTDKQYFFVNQRLVSDKLVAHAIKQAYEDMIHRQRHPIFVLFLTLDPALVDVNAHPSKREVRFRQAQLTHDFMFSSLHRALRNIQPRAAQLTPLSSASPKLPESTTATAQPHHKMIPHTFARPPRLQETKAYYQWAQTPPPAVTPAPQPEIKKINLPLGQALGQIHGTFIVAENAQGLVVVDMHAAHERILYEQFKSVLKTQKQIPVQRLLLPLPLTLTPVQQDSLAQHGAWLKTLGFDWTINDKEFILLTVPARLKNSDCISIIGDVLQELSEFPKSTQLQRAQEQIIANMCCHQAVRAHDLLSISEMNQLLRDLETTPAAGQCNHGRPTWIQLDATQLDALFLRGQ.

A compositionally biased stretch (polar residues) spans 335-351 (PLSSASPKLPESTTATA). Positions 335–354 (PLSSASPKLPESTTATAQPH) are disordered.

Belongs to the DNA mismatch repair MutL/HexB family.

Its function is as follows. This protein is involved in the repair of mismatches in DNA. It is required for dam-dependent methyl-directed DNA mismatch repair. May act as a 'molecular matchmaker', a protein that promotes the formation of a stable complex between two or more DNA-binding proteins in an ATP-dependent manner without itself being part of a final effector complex. In Dichelobacter nodosus (strain VCS1703A), this protein is DNA mismatch repair protein MutL.